Reading from the N-terminus, the 195-residue chain is Putative NADH dehydrogenase/NAD(P)H nitroreductase Caul_0018 (195 aa).

Belongs to the nitroreductase family. HadB/RutE subfamily. FMN is required as a cofactor.

The sequence is that of Putative NADH dehydrogenase/NAD(P)H nitroreductase Caul_0018 from Caulobacter sp. (strain K31).